The primary structure comprises 680 residues: Lipase 1 (680 aa).

The signal sequence occupies residues 1-34 (MKSQNKYSIRKFSVGASSILIATLLFLSGGQAQA). The propeptide occupies 35–290 (AEKQVNMGNS…AKAKGDQTNK (256 aa)). Disordered stretches follow at residues 39–58 (VNMG…GDQQ) and 82–260 (KNLH…KNGL). The segment covering 40–58 (NMGNSQEDTVTAQSIGDQQ) has biased composition (polar residues). The segment covering 84 to 112 (LHNDKTISEENHRKTDDLNKDQLKDDKKS) has biased composition (basic and acidic residues). 2 stretches are compositionally biased toward polar residues: residues 162 to 193 (SQDL…SQRE) and 204 to 223 (QPQQ…FNNE). Basic and acidic residues predominate over residues 224 to 234 (QEVKPQKDEKT). Over residues 235-246 (LSVSDLKNNQKS) the composition is skewed to polar residues. S408 acts as the Nucleophile in catalysis. The active-site Charge relay system is D600. Residue D638 coordinates Ca(2+). Catalysis depends on H639, which acts as the Charge relay system. D641, D646, and D649 together coordinate Ca(2+).

This sequence belongs to the AB hydrolase superfamily. Lipase family.

It is found in the secreted. The catalysed reaction is a triacylglycerol + H2O = a diacylglycerol + a fatty acid + H(+). In Staphylococcus aureus (strain MRSA252), this protein is Lipase 1 (lip1).